The chain runs to 491 residues: Probable cytosol aminopeptidase (491 aa).

Positions 263 and 268 each coordinate Mn(2+). Residue Lys275 is part of the active site. Residues Asp286, Asp345, and Glu347 each contribute to the Mn(2+) site. Arg349 is a catalytic residue.

This sequence belongs to the peptidase M17 family. Mn(2+) is required as a cofactor.

It is found in the cytoplasm. The enzyme catalyses Release of an N-terminal amino acid, Xaa-|-Yaa-, in which Xaa is preferably Leu, but may be other amino acids including Pro although not Arg or Lys, and Yaa may be Pro. Amino acid amides and methyl esters are also readily hydrolyzed, but rates on arylamides are exceedingly low.. It catalyses the reaction Release of an N-terminal amino acid, preferentially leucine, but not glutamic or aspartic acids.. In terms of biological role, presumably involved in the processing and regular turnover of intracellular proteins. Catalyzes the removal of unsubstituted N-terminal amino acids from various peptides. The chain is Probable cytosol aminopeptidase from Haemophilus influenzae (strain PittGG).